Consider the following 167-residue polypeptide: Transmembrane protein 229B (167 aa).

The Cytoplasmic segment spans residues 1-14; sequence MASAEPLTALSRWY. Residues 15 to 35 form a helical membrane-spanning segment; the sequence is LYAIHGYFCEVMFTAAWEFVV. Topologically, residues 36-40 are extracellular; that stretch reads NFNWK. Residues 41 to 61 traverse the membrane as a helical segment; it reads FPGVTSVWALFIYGTSILIVE. Over 62–73 the chain is Cytoplasmic; it reads RMYLRLRGRCPL. A helical transmembrane segment spans residues 74 to 94; the sequence is LVRCVIYTLWTYLWEFTTGFI. Over 95-109 the chain is Extracellular; sequence LRQFNACPWDYSQFD. The helical transmembrane segment at 110 to 130 threads the bilayer; that stretch reads FDFMGLITLEYAVPWFCGALI. Residues 131-167 are Cytoplasmic-facing; the sequence is MEQFIIRNTLRLRFDKDAEPGEPASPPALANGHVKTD. A disordered region spans residues 148–167; sequence AEPGEPASPPALANGHVKTD.

It belongs to the TMEM229 family.

It is found in the membrane. The polypeptide is Transmembrane protein 229B (TMEM229B) (Mus musculus (Mouse)).